Reading from the N-terminus, the 1001-residue chain is UPF0182 protein Mjls_1469 (1001 aa).

The next 7 membrane-spanning stretches (helical) occupy residues 16 to 36, 61 to 81, 112 to 132, 174 to 194, 209 to 229, 258 to 278, and 286 to 306; these read VLIG…RFID, VVVF…GLAL, LFGF…AQSY, FVAT…FGGI, IQLV…YWLD, KLIL…AIVL, and IGVV…PLVV. A compositionally biased stretch (low complexity) spans 900–929; that stretch reads ATGPAPANLPDGQPAAQPPNGQQPAAQTPG. The interval 900–977 is disordered; sequence ATGPAPANLP…MSGLQDAQRS (78 aa).

The protein belongs to the UPF0182 family.

The protein localises to the cell membrane. This Mycobacterium sp. (strain JLS) protein is UPF0182 protein Mjls_1469.